The sequence spans 155 residues: DNA-directed RNA polymerase II subunit rpb4 (155 aa).

Belongs to the eukaryotic RPB4 RNA polymerase subunit family. In terms of assembly, component of the RNA polymerase II (Pol II) complex consisting of 12 subunits. RPB4 and RPB7 form a subcomplex that protrudes from the 10-subunit Pol II core complex.

Its subcellular location is the nucleus. Functionally, DNA-dependent RNA polymerase catalyzes the transcription of DNA into RNA using the four ribonucleoside triphosphates as substrates. Component of RNA polymerase II which synthesizes mRNA precursors and many functional non-coding RNAs. Pol II is the central component of the basal RNA polymerase II transcription machinery. It is composed of mobile elements that move relative to each other. RPB4 is part of a subcomplex with RPB7 that binds to a pocket formed by RPB1, RPB2 and RPB6 at the base of the clamp element. The RPB4-RPB7 subcomplex seems to lock the clamp via RPB7 in the closed conformation thus preventing double-stranded DNA to enter the active site cleft. The RPB4-RPB7 subcomplex binds single-stranded DNA and RNA. The chain is DNA-directed RNA polymerase II subunit rpb4 (polr2d) from Dictyostelium discoideum (Social amoeba).